We begin with the raw amino-acid sequence, 499 residues long: Glycerol kinase (499 aa).

Threonine 13 is a binding site for ADP. ATP contacts are provided by threonine 13, threonine 14, and serine 15. Threonine 13 lines the sn-glycerol 3-phosphate pocket. Residue arginine 17 coordinates ADP. Arginine 83, glutamate 84, tyrosine 135, and aspartate 245 together coordinate sn-glycerol 3-phosphate. Residues arginine 83, glutamate 84, tyrosine 135, aspartate 245, and glutamine 246 each contribute to the glycerol site. ADP contacts are provided by threonine 267 and glycine 310. The ATP site is built by threonine 267, glycine 310, glutamine 314, and glycine 411. ADP is bound by residues glycine 411 and asparagine 415.

It belongs to the FGGY kinase family. As to quaternary structure, homotetramer and homodimer (in equilibrium).

The catalysed reaction is glycerol + ATP = sn-glycerol 3-phosphate + ADP + H(+). The protein operates within polyol metabolism; glycerol degradation via glycerol kinase pathway; sn-glycerol 3-phosphate from glycerol: step 1/1. Activated by phosphorylation and inhibited by fructose 1,6-bisphosphate (FBP). In terms of biological role, key enzyme in the regulation of glycerol uptake and metabolism. Catalyzes the phosphorylation of glycerol to yield sn-glycerol 3-phosphate. This is Glycerol kinase from Halothermothrix orenii (strain H 168 / OCM 544 / DSM 9562).